We begin with the raw amino-acid sequence, 226 residues long: Lipoprotein signal peptidase (226 aa).

The next 3 helical transmembrane spans lie at 12-32 (KVVAALIVLLLVVDQVIKIWV), 69-89 (FLSLFRIVAMGFCIYLLAKLV), and 103-123 (SLIIAGGIGNIIDSIFYGVIF). Active-site residues include D150 and D184. Residues 173–193 (FVFFHPVFNFADSCISIGLIL) traverse the membrane as a helical segment.

Belongs to the peptidase A8 family.

The protein localises to the cell inner membrane. It catalyses the reaction Release of signal peptides from bacterial membrane prolipoproteins. Hydrolyzes -Xaa-Yaa-Zaa-|-(S,diacylglyceryl)Cys-, in which Xaa is hydrophobic (preferably Leu), and Yaa (Ala or Ser) and Zaa (Gly or Ala) have small, neutral side chains.. It participates in protein modification; lipoprotein biosynthesis (signal peptide cleavage). Its function is as follows. This protein specifically catalyzes the removal of signal peptides from prolipoproteins. This is Lipoprotein signal peptidase from Porphyromonas gingivalis (strain ATCC 33277 / DSM 20709 / CIP 103683 / JCM 12257 / NCTC 11834 / 2561).